Consider the following 224-residue polypeptide: Metalloproteinase inhibitor 4 (224 aa).

The N-terminal stretch at 1-29 (MPQSPRPVPSWALLLRLLALLRPPGLGEA) is a signal peptide. Cysteine 30 lines the Zn(2+) pocket. Involved in metalloproteinase-binding regions lie at residues 30–33 (CSCA) and 99–100 (SS). Disulfide bonds link cysteine 30/cysteine 102, cysteine 32/cysteine 131, cysteine 42/cysteine 156, cysteine 158/cysteine 205, cysteine 163/cysteine 168, and cysteine 176/cysteine 197. The region spanning 30–156 (CSCAPAHPQQ…SLNHHYHLNC (127 aa)) is the NTR domain.

This sequence belongs to the protease inhibitor I35 (TIMP) family.

It is found in the secreted. In terms of biological role, complexes with metalloproteinases (such as collagenases) and irreversibly inactivates them by binding to their catalytic zinc cofactor. The polypeptide is Metalloproteinase inhibitor 4 (TIMP4) (Bos taurus (Bovine)).